A 164-amino-acid chain; its full sequence is UPF0304 protein PC1_2778 (164 aa).

The protein belongs to the UPF0304 family.

In Pectobacterium carotovorum subsp. carotovorum (strain PC1), this protein is UPF0304 protein PC1_2778.